The primary structure comprises 352 residues: [Citrate [pro-3S]-lyase] ligase (352 aa).

Residues Met1 to Thr128 form the N-acetyltransferase domain.

The enzyme catalyses holo-[citrate lyase ACP] + acetate + ATP = acetyl-[citrate lyase ACP] + AMP + diphosphate. In terms of biological role, acetylation of prosthetic group (2-(5''-phosphoribosyl)-3'-dephosphocoenzyme-A) of the gamma subunit of citrate lyase. The polypeptide is [Citrate [pro-3S]-lyase] ligase (citC) (Escherichia coli (strain K12)).